The sequence spans 231 residues: Cysteine-rich venom protein VAR10 (231 aa).

An N-terminal signal peptide occupies residues 1 to 19 (MILLKLYLTLAAILCQSRG). In terms of domain architecture, SCP spans 41–169 (NKHNDLRRTV…SLKYFQVCQY (129 aa)). Disulfide bonds link Cys-77–Cys-156, Cys-95–Cys-170, Cys-151–Cys-167, Cys-189–Cys-196, and Cys-214–Cys-231. The ShKT domain maps to 205 to 231 (CAYNDDYTSCPDLTKQVGCHHPVTANC).

The protein belongs to the CRISP family. Post-translationally, contains 8 disulfide bonds. In terms of tissue distribution, expressed by the venom gland.

The protein localises to the secreted. In terms of biological role, blocks ryanodine receptors, and potassium channels. This chain is Cysteine-rich venom protein VAR10, found in Varanus varius (Lace monitor lizard).